The chain runs to 138 residues: MRHYEIVFMVHPDQSEQVSAMIERYRGLIEGDGGKIHRLEDWGRRQLAYPINKIHKAHYVLMNVECGEAALAELVSAFRFNDAVIRHMVMLMERAFTEASPLAKGREEDDSDSSARRARDDSDDDGDDDEDDRRASAD.

The tract at residues 100-138 is disordered; it reads SPLAKGREEDDSDSSARRARDDSDDDGDDDEDDRRASAD. The span at 121–131 shows a compositional bias: acidic residues; it reads DSDDDGDDDED.

It belongs to the bacterial ribosomal protein bS6 family.

Functionally, binds together with bS18 to 16S ribosomal RNA. In Thioalkalivibrio sulfidiphilus (strain HL-EbGR7), this protein is Small ribosomal subunit protein bS6.